Here is a 441-residue protein sequence, read N- to C-terminus: Methylenetetrahydrofolate--tRNA-(uracil-5-)-methyltransferase TrmFO (441 aa).

Position 11-16 (11-16) interacts with FAD; sequence GAGLAG.

The protein belongs to the MnmG family. TrmFO subfamily. FAD serves as cofactor.

The protein resides in the cytoplasm. It catalyses the reaction uridine(54) in tRNA + (6R)-5,10-methylene-5,6,7,8-tetrahydrofolate + NADH + H(+) = 5-methyluridine(54) in tRNA + (6S)-5,6,7,8-tetrahydrofolate + NAD(+). It carries out the reaction uridine(54) in tRNA + (6R)-5,10-methylene-5,6,7,8-tetrahydrofolate + NADPH + H(+) = 5-methyluridine(54) in tRNA + (6S)-5,6,7,8-tetrahydrofolate + NADP(+). Its function is as follows. Catalyzes the folate-dependent formation of 5-methyl-uridine at position 54 (M-5-U54) in all tRNAs. This is Methylenetetrahydrofolate--tRNA-(uracil-5-)-methyltransferase TrmFO from Lactiplantibacillus plantarum (strain ATCC BAA-793 / NCIMB 8826 / WCFS1) (Lactobacillus plantarum).